Consider the following 202-residue polypeptide: Transmembrane protein 223 (202 aa).

Topologically, residues 1 to 43 are mitochondrial matrix; the sequence is MAAPWRRWPTGLLAVLRPLLTCRPLQGTTLQRDVLLFEHDRGR. The chain crosses the membrane as a helical span at residues 44–64; the sequence is FFTILGLFCAGQGVFWASMAV. Residues 65–97 are Mitochondrial intermembrane-facing; that stretch reads AAVSRPPVPVQPLDAEVPNRGPFDLRSALWRYG. The chain crosses the membrane as a helical span at residues 98–118; that stretch reads LAVGCGAIGALVLGAGLLFSL. At 119–202 the chain is on the mitochondrial matrix side; the sequence is RSVRSVVLRA…DNTVGAYRSL (84 aa).

It belongs to the TMEM223 family. As to quaternary structure, associates with the mitochondrial ribosome.

It is found in the mitochondrion inner membrane. In terms of biological role, mitochondrial ribosome-associated protein involved in the first steps of cytochrome c oxidase complex (complex IV) biogenesis. Stimulates the translation of MT-CO1 mRNA and is a constituent of early MT-CO1 assembly intermediates. The chain is Transmembrane protein 223 from Homo sapiens (Human).